The sequence spans 562 residues: Apyrase (562 aa).

An N-terminal signal peptide occupies residues 1–24 (MAGRPGYSEVIFLYVVSVAVIARA). 3 residues coordinate a divalent metal cation: aspartate 47, histidine 49, and aspartate 98. Asparagine 112 carries N-linked (GlcNAc...) asparagine glycosylation. Residues asparagine 130, histidine 233, and histidine 257 each coordinate a divalent metal cation. Residue arginine 370 participates in AMP binding. Asparagine 390 is a glycosylation site (N-linked (GlcNAc...) asparagine). AMP contacts are provided by arginine 405, phenylalanine 424, and aspartate 514.

The protein belongs to the 5'-nucleotidase family. (Microbial infection) Interacts with Zika virus envelope protein E and Zika virus-like particles; the interaction does not affect Zika virus replication in human endothelial cells and keratinocytes. Requires a divalent metal cation as cofactor. The N-terminus is blocked. As to expression, female saliva (at protein level). Female salivary gland (at protein level). Not detected or low-level expression in female carcasses without salivary glands. Not detected in male tissues.

It localises to the secreted. The catalysed reaction is a ribonucleoside 5'-triphosphate + 2 H2O = a ribonucleoside 5'-phosphate + 2 phosphate + 2 H(+). Functionally, facilitates hematophagy by preventing ADP-, collagen- and thrombin-dependent platelet aggregation in the host. Cleaves adenosine triphosphate (ATP) and adenosine diphosphate (ADP) to adenosine monophosphate (AMP) and inorganic phosphate. May reduce probing time by facilitating the speed of locating blood. Its function is as follows. (Microbial infection) Does not affect Zika virus replication in human endothelial cells and keratinocytes. This Aedes aegypti (Yellowfever mosquito) protein is Apyrase.